Consider the following 352-residue polypeptide: tRNA(Ile)-lysidine synthase (352 aa).

Residue 58–63 (SGGADS) participates in ATP binding.

The protein belongs to the tRNA(Ile)-lysidine synthase family.

It is found in the cytoplasm. It carries out the reaction cytidine(34) in tRNA(Ile2) + L-lysine + ATP = lysidine(34) in tRNA(Ile2) + AMP + diphosphate + H(+). Functionally, ligates lysine onto the cytidine present at position 34 of the AUA codon-specific tRNA(Ile) that contains the anticodon CAU, in an ATP-dependent manner. Cytidine is converted to lysidine, thus changing the amino acid specificity of the tRNA from methionine to isoleucine. The polypeptide is tRNA(Ile)-lysidine synthase (Streptomyces coelicolor (strain ATCC BAA-471 / A3(2) / M145)).